The sequence spans 513 residues: Cytochrome P450 monooxygenase ARMGADRAFT_1018418 (513 aa).

A helical transmembrane segment spans residues 1–21 (MTHASSAWFLAAVVIVTFIVV). Heme is bound at residue C435. N442 carries an N-linked (GlcNAc...) asparagine glycan.

It belongs to the cytochrome P450 family. It depends on heme as a cofactor.

Its subcellular location is the membrane. The protein operates within secondary metabolite biosynthesis. In terms of biological role, cytochrome P450 monooxygenase, part of the gene cluster that mediates the biosynthesis of melleolides, a range of antifungal and phytotoxic polyketide derivatives composed of an orsellinic acid (OA) moiety esterified to various sesquiterpene alcohols. The first step in melleolides biosynthesis is performed by the delta(6)-protoilludene synthase PRO1 which catalyzes the cyclization of farnesyl diphosphate to protoilludene. The orsellinic acid synthase armB produces OA by condensing acetyl-CoA with 3 malonyl-CoA units in a three-round chain elongation reaction folowed by a C2-C7 ring closure. ArmB further catalyzes the trans-esterification of OA to the various sesquiterpene alcohols resulting from the hydroxylation of protoilludene. The melleolides cluster also includes 5 cytochrome P450 monooxygenases, 4 NAD(+)-dependent oxidoreductases, one flavin-dependent oxidoreductase, and one O-methyltransferase. The cytochrome P450 monooxygenases may be involved in protoilludene hydroxylation to elaborate melleolides with multiple alcohol groups, such as melleolide D, which carries alcohol functionalities at C-4, C-5, C-10, and C-13. The role of the NAD(+)-dependent enzymes remains unknown. Numerous melleolides, including arnamial, show 5'-O-methylation of the aromatic moiety which may be catalyzed by the methyltransferase encoded in the cluster. The flavin-dependent oxidoreductase might represent the dehydrogenase yielding the aldehyde in position 1 of arnamial and other melleolides. Finally, several halogenase localized outside of the cluster, are able to catalyze the transfer of a single chlorine atom to the melleolide backbone, resulting in a 6'-chloromelleolide product. In Armillaria gallica (Bulbous honey fungus), this protein is Cytochrome P450 monooxygenase ARMGADRAFT_1018418.